The primary structure comprises 186 residues: uncharacterized protein (186 aa).

Positions 1 to 18 (MNKFLFAAALIVSGLLVG) are cleaved as a signal peptide. A lipid anchor (N-palmitoyl cysteine) is attached at cysteine 19. Cysteine 19 is lipidated: S-diacylglycerol cysteine.

Its subcellular location is the cell membrane. This is an uncharacterized protein from Escherichia coli (strain K12).